Here is a 347-residue protein sequence, read N- to C-terminus: MSYAIRVAVVGASGYAGGEILRLLLGHPAYADDRLTIGTLTAAASSGDTLGEHHPHLTPLAHRVLESTELTVLAGHDVVFLGLPHGHSAALAERLGPETLIIDCGADFRLTDAGAWGRFYESPYAGSWPYGLPELPGGRERLQKARRIAVPGCYPTAILLALLPAMAEGLIEPAVTVFAVSGISGAGRAAKTKLLGSEVIGSARAYNIGGTHRHTAEIIQGLRVVTDRAVTVSFTPVLIPTSRGILAACTARTSSSLSKLRTAYEKAYQVEPFVYLMPEGQLPFTGAVIGSNAAHIAVAVDEAAETFIAISAIDNLVKGTAGAAVQSMNLALGWPEAEGLSVVGVAP.

C153 is a catalytic residue.

The protein belongs to the NAGSA dehydrogenase family. Type 1 subfamily.

It localises to the cytoplasm. It carries out the reaction N-acetyl-L-glutamate 5-semialdehyde + phosphate + NADP(+) = N-acetyl-L-glutamyl 5-phosphate + NADPH + H(+). Its pathway is amino-acid biosynthesis; L-arginine biosynthesis; N(2)-acetyl-L-ornithine from L-glutamate: step 3/4. Catalyzes the NADPH-dependent reduction of N-acetyl-5-glutamyl phosphate to yield N-acetyl-L-glutamate 5-semialdehyde. In Mycobacterium leprae (strain Br4923), this protein is N-acetyl-gamma-glutamyl-phosphate reductase.